Reading from the N-terminus, the 170-residue chain is Ribosome maturation factor RimM (170 aa).

The PRC barrel domain maps to 97-170 (KNEFYWTDLI…QIRVEWGSDW (74 aa)).

Belongs to the RimM family. In terms of assembly, binds ribosomal protein uS19.

The protein localises to the cytoplasm. Functionally, an accessory protein needed during the final step in the assembly of 30S ribosomal subunit, possibly for assembly of the head region. Essential for efficient processing of 16S rRNA. May be needed both before and after RbfA during the maturation of 16S rRNA. It has affinity for free ribosomal 30S subunits but not for 70S ribosomes. In Dechloromonas aromatica (strain RCB), this protein is Ribosome maturation factor RimM.